Here is a 221-residue protein sequence, read N- to C-terminus: Ependymin-2 (221 aa).

The N-terminal stretch at 1-21 is a signal peptide; it reads MQDFAFAALSIWLCLGATALA. Asn33, Asn73, and Asn97 each carry an N-linked (GlcNAc...) asparagine glycan.

Belongs to the ependymin family. Post-translationally, binds calcium through the terminal sialic acids. EPDs are synthesized in the meninx and secreted in the cerebrospinal fluid.

It is found in the secreted. Functionally, may play a role in neural plasticity. May be involved during axon regeneration. The sequence is that of Ependymin-2 (epd2) from Salmo salar (Atlantic salmon).